The chain runs to 85 residues: Large ribosomal subunit protein bL27 (85 aa).

The segment at 1–24 (MAHKKAGGSSRNGRDSHSKRLGVK) is disordered.

It belongs to the bacterial ribosomal protein bL27 family.

This is Large ribosomal subunit protein bL27 from Nitrosomonas eutropha (strain DSM 101675 / C91 / Nm57).